The sequence spans 375 residues: Actin-binding Rho-activating protein (375 aa).

2 stretches are compositionally biased toward basic and acidic residues: residues 1-11 (MAPGEREREAG) and 79-99 (KPDR…SHIK). 2 disordered regions span residues 1 to 20 (MAPG…LRKV) and 38 to 99 (NENS…SHIK). 2 positions are modified to phosphoserine: Ser-150 and Ser-182. The span at 173-182 (QEEPTWKSDS) shows a compositional bias: basic and acidic residues. Residues 173 to 204 (QEEPTWKSDSVDTEDSGYGGDMEERPEQDAAP) form a disordered region. Actin-binding regions lie at residues 193–293 (DMEE…AERA) and 294–375 (KRAE…TLLE). 2 interaction with actin regions span residues 234–279 (SQVD…GDEG) and 346–375 (MRAR…TLLE).

In terms of assembly, binds F-actin and ABLIM1, ABLIM2 and ABLIM3. Interaction with ABLIM2 and ABLIM3 enhances activity. In terms of tissue distribution, expressed specifically in heart and skeletal muscle.

Its subcellular location is the cytoplasm. It is found in the myofibril. The protein resides in the sarcomere. The protein localises to the cytoskeleton. Its function is as follows. Acts as an activator of serum response factor (SRF)-dependent transcription possibly by inducing nuclear translocation of MKL1 or MKL2 and through a mechanism requiring Rho-actin signaling. In Mus musculus (Mouse), this protein is Actin-binding Rho-activating protein.